A 139-amino-acid chain; its full sequence is Large ribosomal subunit protein uL16 (139 aa).

A disordered region spans residues 74 to 94; sequence LTKKPAETRQGSGKGSPESWV.

The protein belongs to the universal ribosomal protein uL16 family. As to quaternary structure, part of the 50S ribosomal subunit.

In terms of biological role, binds 23S rRNA and is also seen to make contacts with the A and possibly P site tRNAs. The polypeptide is Large ribosomal subunit protein uL16 (Saccharopolyspora erythraea (strain ATCC 11635 / DSM 40517 / JCM 4748 / NBRC 13426 / NCIMB 8594 / NRRL 2338)).